A 321-amino-acid chain; its full sequence is Annexin A5 (321 aa).

At A2 the chain carries N-acetylalanine. Annexin repeat units follow at residues 15-86, 87-158, 170-242, and 246-317; these read FDER…ALMK, PSRL…VLLQ, AQVE…AVVK, and SIPA…LLCG. K29 participates in a covalent cross-link: Glycyl lysine isopeptide (Lys-Gly) (interchain with G-Cter in SUMO1); alternate. A Glycyl lysine isopeptide (Lys-Gly) (interchain with G-Cter in SUMO2); alternate cross-link involves residue K29. N6-acetyllysine is present on residues K70, K76, K79, K97, and K101. K290 carries the N6-succinyllysine modification. The short motif at 314–320 is the [IL]-x-C-x-x-[DE] motif element; it reads LLCGGED.

The protein belongs to the annexin family. Monomer. Binds ATRX and EIF5B. S-nitrosylation is induced by interferon-gamma and oxidatively-modified low-densitity lipoprotein (LDL(ox)) possibly implicating the iNOS-S100A8/9 transnitrosylase complex.

This protein is an anticoagulant protein that acts as an indirect inhibitor of the thromboplastin-specific complex, which is involved in the blood coagulation cascade. The polypeptide is Annexin A5 (ANXA5) (Bos taurus (Bovine)).